We begin with the raw amino-acid sequence, 109 residues long: Urease subunit gamma (109 aa).

The protein belongs to the urease gamma subunit family. Heterotrimer of UreA (gamma), UreB (beta) and UreC (alpha) subunits. Three heterotrimers associate to form the active enzyme.

The protein resides in the cytoplasm. It carries out the reaction urea + 2 H2O + H(+) = hydrogencarbonate + 2 NH4(+). Its pathway is nitrogen metabolism; urea degradation; CO(2) and NH(3) from urea (urease route): step 1/1. This Natronomonas pharaonis (strain ATCC 35678 / DSM 2160 / CIP 103997 / JCM 8858 / NBRC 14720 / NCIMB 2260 / Gabara) (Halobacterium pharaonis) protein is Urease subunit gamma.